A 201-amino-acid chain; its full sequence is Ras-related protein Rab-9A (201 aa).

A2 is subject to N-acetylalanine. G17 serves as a coordination point for GDP. Residues G17, V18, G19, K20, S21, S22, T34, H38, and T39 each contribute to the GTP site. GDP contacts are provided by G19, K20, S21, and S22. Mg(2+) is bound at residue S21. The short motif at 31–42 is the Switch 1 element; sequence KFDTQLFHTIGV. 2 residues coordinate Mg(2+): T39 and D62. The Switch 2 motif lies at 64–78; sequence AGQERFRSLRTPFYR. The GTP site is built by G65, N124, K125, and D127. GDP is bound by residues N124, K125, D127, A155, and K156. K156 is a GTP binding site. S179 is subject to Phosphoserine. Phosphothreonine is present on T187. S-geranylgeranyl cysteine attachment occurs at residues C200 and C201.

Belongs to the small GTPase superfamily. Rab family. In terms of assembly, interacts (preferentially in its GTP-bound form) with GCC2 (via its GRIP domain). Interacts (GTP-bound form) with SGSM1; the GDP-bound form has much lower affinity for SGSM1. Interacts with SGSM2. The GTP-bound form but not the GDP-bound form interacts with HPS4 and the BLOC-3 complex (heterodimer of HPS1 and HPS4) but does not interact with HPS1 alone. Interacts (GTP-bound form) with NDE1; two RAB9A-GTP molecules lie on the opposite sides of the NDE1 homodimer; the interaction leads to RAB9A-dynein motor tethering. Interacts (GTP-bound form) with NDEL1. The cofactor is Mg(2+).

It localises to the cell membrane. The protein resides in the endoplasmic reticulum membrane. The protein localises to the golgi apparatus membrane. It is found in the late endosome. Its subcellular location is the cytoplasmic vesicle. It localises to the phagosome membrane. The protein resides in the phagosome. The protein localises to the cytoplasmic vesicle membrane. It is found in the melanosome. The catalysed reaction is GTP + H2O = GDP + phosphate + H(+). With respect to regulation, regulated by guanine nucleotide exchange factors (GEFs) which promote the exchange of bound GDP for free GTP. Regulated by GTPase activating proteins (GAPs) which increase the GTP hydrolysis activity. Inhibited by GDP dissociation inhibitors (GDIs). Functionally, the small GTPases Rab are key regulators of intracellular membrane trafficking, from the formation of transport vesicles to their fusion with membranes. Rabs cycle between an inactive GDP-bound form and an active GTP-bound form that is able to recruit to membranes different sets of downstream effectors directly responsible for vesicle formation, movement, tethering and fusion. RAB9A is involved in the transport of proteins between the endosomes and the trans-Golgi network (TGN). Specifically uses NDE1/NDEL1 as an effector to interact with the dynein motor complex in order to control retrograde trafficking of RAB9-associated late endosomes to the TGN. Involved in the recruitment of SGSM2 to melanosomes and is required for the proper trafficking of melanogenic enzymes TYR, TYRP1 and DCT/TYRP2 to melanosomes in melanocytes. This Canis lupus familiaris (Dog) protein is Ras-related protein Rab-9A (RAB9A).